We begin with the raw amino-acid sequence, 70 residues long: Conotoxin ArMKLT2-0111 (70 aa).

A signal peptide spans 1-22; that stretch reads MKLTCVLIIAVLFLTACQLTTG. Residues 23 to 40 constitute a propeptide that is removed on maturation; sequence EQKDHALRSTDKNSKLTR. Q41 is modified (pyrrolidone carboxylic acid). Intrachain disulfides connect C42-C56, C49-C60, and C55-C67.

It belongs to the conotoxin O1 superfamily. As to expression, expressed by the venom duct.

The protein resides in the secreted. This Conus arenatus (Sand-dusted cone) protein is Conotoxin ArMKLT2-0111.